Reading from the N-terminus, the 199-residue chain is Lysine exporter LysE (199 aa).

5 helical membrane passes run 6–26 (VVGF…NAFV), 42–62 (LCTV…GALI), 68–88 (ALNV…LLAA), 144–164 (WLFG…LGFG), and 178–198 (WRIL…SLTV).

This sequence belongs to the LysE/ArgO transporter (TC 2.A.75) family.

It localises to the cell inner membrane. Its function is as follows. Catalyzes the efflux of L-lysine. In Mycobacterium bovis (strain ATCC BAA-935 / AF2122/97), this protein is Lysine exporter LysE.